Here is a 428-residue protein sequence, read N- to C-terminus: Serine--tRNA ligase (428 aa).

Position 231–233 (231–233 (TAE)) interacts with L-serine. ATP-binding positions include 262–264 (RRE) and valine 278. Residue glutamate 285 coordinates L-serine. 349 to 352 (EVSS) is an ATP binding site. Serine 384 serves as a coordination point for L-serine.

It belongs to the class-II aminoacyl-tRNA synthetase family. Type-1 seryl-tRNA synthetase subfamily. Homodimer. The tRNA molecule binds across the dimer.

The protein resides in the cytoplasm. The catalysed reaction is tRNA(Ser) + L-serine + ATP = L-seryl-tRNA(Ser) + AMP + diphosphate + H(+). It catalyses the reaction tRNA(Sec) + L-serine + ATP = L-seryl-tRNA(Sec) + AMP + diphosphate + H(+). It participates in aminoacyl-tRNA biosynthesis; selenocysteinyl-tRNA(Sec) biosynthesis; L-seryl-tRNA(Sec) from L-serine and tRNA(Sec): step 1/1. Catalyzes the attachment of serine to tRNA(Ser). Is also able to aminoacylate tRNA(Sec) with serine, to form the misacylated tRNA L-seryl-tRNA(Sec), which will be further converted into selenocysteinyl-tRNA(Sec). This chain is Serine--tRNA ligase, found in Chlamydia trachomatis serovar L2 (strain ATCC VR-902B / DSM 19102 / 434/Bu).